A 193-amino-acid polypeptide reads, in one-letter code: Transmembrane protein 066L (193 aa).

The next 2 helical transmembrane spans lie at 14–34 (VLFA…GLVW) and 48–68 (LVVE…LVVV).

It belongs to the IIV-6 357R family.

The protein localises to the membrane. This chain is Transmembrane protein 066L, found in Invertebrate iridescent virus 3 (IIV-3).